Consider the following 351-residue polypeptide: N-acetyl-gamma-glutamyl-phosphate reductase (351 aa).

Cysteine 154 is a catalytic residue.

It belongs to the NAGSA dehydrogenase family. Type 1 subfamily.

The protein localises to the cytoplasm. It carries out the reaction N-acetyl-L-glutamate 5-semialdehyde + phosphate + NADP(+) = N-acetyl-L-glutamyl 5-phosphate + NADPH + H(+). It participates in amino-acid biosynthesis; L-arginine biosynthesis; N(2)-acetyl-L-ornithine from L-glutamate: step 3/4. Catalyzes the NADPH-dependent reduction of N-acetyl-5-glutamyl phosphate to yield N-acetyl-L-glutamate 5-semialdehyde. The polypeptide is N-acetyl-gamma-glutamyl-phosphate reductase (Prochlorococcus marinus (strain MIT 9312)).